Consider the following 80-residue polypeptide: Small ribosomal subunit protein uS17 (80 aa).

The protein belongs to the universal ribosomal protein uS17 family. In terms of assembly, part of the 30S ribosomal subunit.

Functionally, one of the primary rRNA binding proteins, it binds specifically to the 5'-end of 16S ribosomal RNA. The chain is Small ribosomal subunit protein uS17 from Cereibacter sphaeroides (strain ATCC 17025 / ATH 2.4.3) (Rhodobacter sphaeroides).